Reading from the N-terminus, the 83-residue chain is NAD(P)H-quinone oxidoreductase subunit L (83 aa).

Helical transmembrane passes span 17 to 37 (VLLAYGALGGAYLLVVPLALL) and 53 to 73 (TAIYGMVFLFFPGLILFAPFI).

This sequence belongs to the complex I NdhL subunit family. NDH-1 can be composed of about 15 different subunits; different subcomplexes with different compositions have been identified which probably have different functions.

It is found in the cellular thylakoid membrane. It catalyses the reaction a plastoquinone + NADH + (n+1) H(+)(in) = a plastoquinol + NAD(+) + n H(+)(out). The catalysed reaction is a plastoquinone + NADPH + (n+1) H(+)(in) = a plastoquinol + NADP(+) + n H(+)(out). Functionally, NDH-1 shuttles electrons from an unknown electron donor, via FMN and iron-sulfur (Fe-S) centers, to quinones in the respiratory and/or the photosynthetic chain. The immediate electron acceptor for the enzyme in this species is believed to be plastoquinone. Couples the redox reaction to proton translocation, and thus conserves the redox energy in a proton gradient. Cyanobacterial NDH-1 also plays a role in inorganic carbon-concentration. The sequence is that of NAD(P)H-quinone oxidoreductase subunit L from Synechococcus sp. (strain RCC307).